The following is a 90-amino-acid chain: Putative membrane protein insertion efficiency factor (90 aa).

The protein belongs to the UPF0161 family.

It localises to the cell membrane. Its function is as follows. Could be involved in insertion of integral membrane proteins into the membrane. The chain is Putative membrane protein insertion efficiency factor from Lactococcus lactis subsp. cremoris (strain SK11).